Consider the following 380-residue polypeptide: Cytochrome b (380 aa).

A run of 4 helical transmembrane segments spans residues 33–53 (FGSL…FLAM), 77–98 (WLLR…YLHI), 113–133 (WNIG…GYVL), and 178–198 (FFTF…LHLL). Residues His83 and His97 each coordinate heme b. Heme b is bound by residues His182 and His196. An a ubiquinone-binding site is contributed by His201. 4 consecutive transmembrane segments (helical) span residues 226–246 (YKDL…ALLN), 288–308 (LGGV…PTLH), 320–340 (SSQT…WIGG), and 347–367 (FIII…FFIP).

It belongs to the cytochrome b family. In terms of assembly, the cytochrome bc1 complex contains 3 respiratory subunits (MT-CYB, CYC1 and UQCRFS1), 2 core proteins (UQCRC1 and UQCRC2) and probably 6 low-molecular weight proteins. It depends on heme b as a cofactor.

The protein resides in the mitochondrion inner membrane. Component of the ubiquinol-cytochrome c reductase complex (complex III or cytochrome b-c1 complex) that is part of the mitochondrial respiratory chain. The b-c1 complex mediates electron transfer from ubiquinol to cytochrome c. Contributes to the generation of a proton gradient across the mitochondrial membrane that is then used for ATP synthesis. The polypeptide is Cytochrome b (mt-cyb) (Lepisosteus oculatus (Spotted gar)).